A 188-amino-acid polypeptide reads, in one-letter code: RNA 2',3'-cyclic phosphodiesterase (188 aa).

His42 serves as the catalytic Proton donor. 2 consecutive short sequence motifs (HXTX) follow at residues 42 to 45 (HMTL) and 130 to 133 (HVTI). His130 serves as the catalytic Proton acceptor.

It belongs to the 2H phosphoesterase superfamily. ThpR family.

The enzyme catalyses a 3'-end 2',3'-cyclophospho-ribonucleotide-RNA + H2O = a 3'-end 2'-phospho-ribonucleotide-RNA + H(+). Functionally, hydrolyzes RNA 2',3'-cyclic phosphodiester to an RNA 2'-phosphomonoester. The protein is RNA 2',3'-cyclic phosphodiesterase of Aquifex aeolicus (strain VF5).